A 408-amino-acid chain; its full sequence is Tryptophan--tRNA ligase, chloroplastic/mitochondrial (408 aa).

The transit peptide at 1–52 directs the protein to the chloroplast and mitochondrion; it reads MGHATSLSHFLILSSSRFSRLGSLTRLLSKPTSLSGSFSSISVTGQGFRCCC. Position 53 is an N-acetylserine (S53). Residues Q72 and 78–81 each bind ATP; that span reads HLGN. The short motif at 73–81 is the 'HIGH' region element; it reads PTGSVHLGN. D197 is an L-tryptophan binding site. ATP-binding positions include 209-211, V260, 269-273, and K272; these read GED and KMSKS. The short motif at 269–273 is the 'KMSKS' region element; it reads KMSKS.

Belongs to the class-I aminoacyl-tRNA synthetase family.

The protein resides in the plastid. It localises to the chloroplast. The protein localises to the mitochondrion. The enzyme catalyses tRNA(Trp) + L-tryptophan + ATP = L-tryptophyl-tRNA(Trp) + AMP + diphosphate + H(+). This chain is Tryptophan--tRNA ligase, chloroplastic/mitochondrial, found in Arabidopsis thaliana (Mouse-ear cress).